The following is a 429-amino-acid chain: GDP-fucose protein O-fucosyltransferase 2 (429 aa).

An N-terminal signal peptide occupies residues 1 to 21 (MATLSFVFLLLGAVSWPPASA). 53–57 (PEGFN) contacts GDP-beta-L-fucose. The Proton acceptor role is filled by glutamate 54. Cysteine 161 and cysteine 192 are disulfide-bonded. Residues asparagine 189, asparagine 209, and asparagine 259 are each glycosylated (N-linked (GlcNAc...) asparagine). Residues 292–294 (HLR), aspartate 371, and 388–389 (TF) contribute to the GDP-beta-L-fucose site. Cysteine 412 and cysteine 419 are joined by a disulfide.

This sequence belongs to the glycosyltransferase 68 family.

Its subcellular location is the endoplasmic reticulum. It localises to the golgi apparatus. The enzyme catalyses L-seryl-[protein] + GDP-beta-L-fucose = 3-O-(alpha-L-fucosyl)-L-seryl-[protein] + GDP + H(+). The catalysed reaction is L-threonyl-[protein] + GDP-beta-L-fucose = 3-O-(alpha-L-fucosyl)-L-threonyl-[protein] + GDP + H(+). It participates in protein modification; protein glycosylation. Functionally, catalyzes the reaction that attaches fucose through an O-glycosidic linkage to a conserved serine or threonine residue in the consensus sequence C1-X-X-S/T-C2 of thrombospondin type I repeats (TSRs) where C1 and C2 are the first and second cysteines of the repeat, respectively. O-fucosylates members of several protein families including the ADAMTS, the thrombospondin (TSP) and spondin families. Required for the proper secretion of ADAMTS family members such as ADAMTSL1 and ADAMTS13. The O-fucosylation of TSRs is also required for restricting epithelial to mesenchymal transition (EMT), maintaining the correct patterning of mesoderm and localization of the definite endoderm. The sequence is that of GDP-fucose protein O-fucosyltransferase 2 (POFUT2) from Pan troglodytes (Chimpanzee).